The following is a 154-amino-acid chain: Aspartate carbamoyltransferase regulatory chain (154 aa).

Cys109, Cys114, Cys138, and Cys141 together coordinate Zn(2+).

The protein belongs to the PyrI family. Contains catalytic and regulatory chains. The cofactor is Zn(2+).

In terms of biological role, involved in allosteric regulation of aspartate carbamoyltransferase. The chain is Aspartate carbamoyltransferase regulatory chain from Methanothrix thermoacetophila (strain DSM 6194 / JCM 14653 / NBRC 101360 / PT) (Methanosaeta thermophila).